We begin with the raw amino-acid sequence, 236 residues long: 15,16-dihydrobiliverdin:ferredoxin oxidoreductase (236 aa).

Belongs to the HY2 family.

The catalysed reaction is 15,16-dihydrobiliverdin + oxidized 2[4Fe-4S]-[ferredoxin] = biliverdin IXalpha + reduced 2[4Fe-4S]-[ferredoxin] + 2 H(+). Catalyzes the two-electron reduction of biliverdin IX-alpha at the C15 methine bridge. The chain is 15,16-dihydrobiliverdin:ferredoxin oxidoreductase from Prochlorococcus marinus (strain AS9601).